Reading from the N-terminus, the 326-residue chain is N-acetyl-gamma-glutamyl-phosphate reductase (326 aa).

Cysteine 155 is an active-site residue.

It belongs to the NAGSA dehydrogenase family. Type 1 subfamily.

Its subcellular location is the cytoplasm. The enzyme catalyses N-acetyl-L-glutamate 5-semialdehyde + phosphate + NADP(+) = N-acetyl-L-glutamyl 5-phosphate + NADPH + H(+). The protein operates within amino-acid biosynthesis; L-arginine biosynthesis; N(2)-acetyl-L-ornithine from L-glutamate: step 3/4. Its function is as follows. Catalyzes the NADPH-dependent reduction of N-acetyl-5-glutamyl phosphate to yield N-acetyl-L-glutamate 5-semialdehyde. The polypeptide is N-acetyl-gamma-glutamyl-phosphate reductase (Shewanella denitrificans (strain OS217 / ATCC BAA-1090 / DSM 15013)).